A 430-amino-acid chain; its full sequence is Dihydrolipoyllysine-residue acetyltransferase component of pyruvate dehydrogenase complex (430 aa).

One can recognise a Lipoyl-binding domain in the interval 2–77; that stretch reads AFEFRLPDIG…VVGDVIVKID (76 aa). K43 bears the N6-lipoyllysine mark. Residues 80–122 are disordered; the sequence is DAEDMQFKGHDDDSSSKEEPAKEEAPAEQAPVATQTEEVDENR. Residues 84–104 are compositionally biased toward basic and acidic residues; it reads MQFKGHDDDSSSKEEPAKEEA. The Peripheral subunit-binding (PSBD) domain maps to 125–162; sequence KAMPSVRKYAREKGVNIKAVSGSGKNGRITKEDVDAYL. The interval 165–199 is disordered; sequence GAPTASNESAASATNEEVAETPAAPAAVSLEGDFP. Residues 168-192 are compositionally biased toward low complexity; it reads TASNESAASATNEEVAETPAAPAAV. The active site involves H401.

The protein belongs to the 2-oxoacid dehydrogenase family. In terms of assembly, forms a 24-polypeptide structural core with octahedral symmetry. (R)-lipoate serves as cofactor.

The catalysed reaction is N(6)-[(R)-dihydrolipoyl]-L-lysyl-[protein] + acetyl-CoA = N(6)-[(R)-S(8)-acetyldihydrolipoyl]-L-lysyl-[protein] + CoA. The pyruvate dehydrogenase complex catalyzes the overall conversion of pyruvate to acetyl-CoA and CO(2). It contains multiple copies of three enzymatic components: pyruvate dehydrogenase (E1), dihydrolipoamide acetyltransferase (E2) and lipoamide dehydrogenase (E3). The polypeptide is Dihydrolipoyllysine-residue acetyltransferase component of pyruvate dehydrogenase complex (pdhC) (Staphylococcus aureus (strain MRSA252)).